The following is a 436-amino-acid chain: Probable cinnamyl alcohol dehydrogenase 8B (436 aa).

Cys-120 provides a ligand contact to Zn(2+). Residue Thr-122 coordinates NADP(+). Zn(2+)-binding residues include His-142, Glu-143, Cys-173, Cys-176, Cys-179, Cys-187, and Cys-236. NADP(+) is bound by residues Thr-240, 261 to 266, 284 to 289, Thr-324, Gly-348, and 371 to 373; these read GLGGLG, STSPGK, and NCV.

Belongs to the zinc-containing alcohol dehydrogenase family. Homodimer. Zn(2+) is required as a cofactor.

The catalysed reaction is (E)-cinnamyl alcohol + NADP(+) = (E)-cinnamaldehyde + NADPH + H(+). It carries out the reaction (E)-coniferol + NADP(+) = (E)-coniferaldehyde + NADPH + H(+). The enzyme catalyses (E)-sinapyl alcohol + NADP(+) = (E)-sinapaldehyde + NADPH + H(+). It catalyses the reaction (E)-4-coumaroyl alcohol + NADP(+) = (E)-4-coumaraldehyde + NADPH + H(+). The catalysed reaction is (E)-caffeyl alcohol + NADP(+) = (E)-caffeyl aldehyde + NADPH + H(+). It participates in aromatic compound metabolism; phenylpropanoid biosynthesis. Functionally, involved in lignin biosynthesis. Catalyzes the final step specific for the production of lignin monomers. Catalyzes the NADPH-dependent reduction of coniferaldehyde, 5-hydroxyconiferaldehyde, sinapaldehyde, 4-coumaraldehyde and caffeyl aldehyde to their respective alcohols. The chain is Probable cinnamyl alcohol dehydrogenase 8B from Oryza sativa subsp. japonica (Rice).